A 223-amino-acid chain; its full sequence is Ribose-5-phosphate isomerase A (223 aa).

Residues T32–T35, D85–D88, and K98–G101 contribute to the substrate site. E107 functions as the Proton acceptor in the catalytic mechanism. Substrate is bound at residue K125.

It belongs to the ribose 5-phosphate isomerase family. Homodimer.

The catalysed reaction is aldehydo-D-ribose 5-phosphate = D-ribulose 5-phosphate. The protein operates within carbohydrate degradation; pentose phosphate pathway; D-ribose 5-phosphate from D-ribulose 5-phosphate (non-oxidative stage): step 1/1. Its function is as follows. Catalyzes the reversible conversion of ribose-5-phosphate to ribulose 5-phosphate. The sequence is that of Ribose-5-phosphate isomerase A from Pseudomonas paraeruginosa (strain DSM 24068 / PA7) (Pseudomonas aeruginosa (strain PA7)).